The sequence spans 59 residues: Large ribosomal subunit protein uL30 (59 aa).

Belongs to the universal ribosomal protein uL30 family. In terms of assembly, part of the 50S ribosomal subunit.

This is Large ribosomal subunit protein uL30 from Staphylococcus haemolyticus (strain JCSC1435).